The sequence spans 429 residues: Isocitrate dehydrogenase [NADP] (429 aa).

Threonine 108 lines the NADP(+) pocket. 5 residues coordinate D-threo-isocitrate: serine 117, asparagine 119, arginine 123, arginine 133, and arginine 156. Aspartate 308 provides a ligand contact to Mg(2+). NADP(+)-binding positions include 340-346, asparagine 353, tyrosine 393, and arginine 397; that span reads HGSAPKY.

The protein belongs to the isocitrate and isopropylmalate dehydrogenases family. Homodimer. The cofactor is Mg(2+). It depends on Mn(2+) as a cofactor.

The enzyme catalyses D-threo-isocitrate + NADP(+) = 2-oxoglutarate + CO2 + NADPH. Catalyzes the oxidative decarboxylation of isocitrate to 2-oxoglutarate and carbon dioxide with the concomitant reduction of NADP(+). In Caldococcus noboribetus, this protein is Isocitrate dehydrogenase [NADP] (icd).